Consider the following 225-residue polypeptide: Ureidoacrylate amidohydrolase RutB (225 aa).

The Proton acceptor role is filled by aspartate 22. Lysine 131 is an active-site residue. Residue cysteine 164 is the Nucleophile of the active site.

The protein belongs to the isochorismatase family. RutB subfamily.

The enzyme catalyses (Z)-3-ureidoacrylate + H2O + H(+) = (Z)-3-aminoacrylate + NH4(+) + CO2. It catalyses the reaction (Z)-3-ureidoacrylate + H2O = (Z)-3-aminoacrylate + carbamate + H(+). The catalysed reaction is (Z)-2-methylureidoacrylate + H2O + H(+) = (Z)-2-methylaminoacrylate + NH4(+) + CO2. In terms of biological role, hydrolyzes ureidoacrylate to form aminoacrylate and carbamate. The carbamate hydrolyzes spontaneously, thereby releasing one of the nitrogen atoms of the pyrimidine ring as ammonia and one of its carbon atoms as CO2. The polypeptide is Ureidoacrylate amidohydrolase RutB (Caulobacter vibrioides (strain ATCC 19089 / CIP 103742 / CB 15) (Caulobacter crescentus)).